We begin with the raw amino-acid sequence, 139 residues long: Large ribosomal subunit protein uL16 (139 aa).

Residues 1 to 20 are compositionally biased toward basic residues; it reads MLIPRRVKHRKQHHPKRRGM. Residues 1–22 form a disordered region; that stretch reads MLIPRRVKHRKQHHPKRRGMAK.

The protein belongs to the universal ribosomal protein uL16 family. As to quaternary structure, part of the 50S ribosomal subunit.

Its function is as follows. Binds 23S rRNA and is also seen to make contacts with the A and possibly P site tRNAs. In Streptomyces coelicolor (strain ATCC BAA-471 / A3(2) / M145), this protein is Large ribosomal subunit protein uL16.